The chain runs to 499 residues: Glycerol kinase (499 aa).

Thr13 contributes to the ADP binding site. ATP contacts are provided by Thr13, Thr14, and Ser15. Thr13 contacts sn-glycerol 3-phosphate. Arg17 is an ADP binding site. Sn-glycerol 3-phosphate-binding residues include Arg83, Glu84, Tyr135, and Asp245. Glycerol-binding residues include Arg83, Glu84, Tyr135, Asp245, and Gln246. Residues Thr267 and Gly310 each coordinate ADP. 4 residues coordinate ATP: Thr267, Gly310, Gln314, and Gly411. ADP is bound by residues Gly411 and Asn415.

This sequence belongs to the FGGY kinase family.

It carries out the reaction glycerol + ATP = sn-glycerol 3-phosphate + ADP + H(+). The protein operates within polyol metabolism; glycerol degradation via glycerol kinase pathway; sn-glycerol 3-phosphate from glycerol: step 1/1. Inhibited by fructose 1,6-bisphosphate (FBP). In terms of biological role, key enzyme in the regulation of glycerol uptake and metabolism. Catalyzes the phosphorylation of glycerol to yield sn-glycerol 3-phosphate. The protein is Glycerol kinase of Xanthomonas euvesicatoria pv. vesicatoria (strain 85-10) (Xanthomonas campestris pv. vesicatoria).